The following is a 675-amino-acid chain: Vitamin K-dependent protein S (675 aa).

A signal peptide spans 1 to 24 (MRVLGGRTGTLLACLALVLPVLEA). Residues 25-41 (NFLSRQHASQVLIRRRR) constitute a propeptide that is removed on maturation. Residues 42–87 (ANTLLEETKKGNLERECIEELCNKEEAREIFENNPETEYFYPKYLG) enclose the Gla domain. 4-carboxyglutamate occurs at positions 47, 48, 55, 57, 60, 61, 66, 67, 70, 73, and 77. Residues Cys-58 and Cys-63 are joined by a disulfide bond. 16 cysteine pairs are disulfide-bonded: Cys-88-Cys-113, Cys-121-Cys-134, Cys-126-Cys-143, Cys-145-Cys-154, Cys-161-Cys-175, Cys-171-Cys-184, Cys-186-Cys-199, Cys-205-Cys-217, Cys-212-Cys-226, Cys-228-Cys-241, Cys-247-Cys-256, Cys-252-Cys-265, Cys-267-Cys-282, Cys-288-Cys-567, Cys-449-Cys-475, and Cys-638-Cys-665. Positions 88 to 116 (CLGSFRAGLFTAARLSTNAYPDLRSCVNA) are thrombin-sensitive. Residues 117–155 (ISDQCNPLPCNEDGFMTCKDGQATFTCICKSGWQGEKCE) form the EGF-like 1 domain. Asp-136 carries the (3R)-3-hydroxyaspartate modification. An EGF-like 2; calcium-binding domain is found at 157-200 (DINECKDPVNINGGCSQICENTPGSYHCSCKNGFVMLSNKKDCK). Asn-177 is modified ((3R)-3-hydroxyasparagine). The EGF-like 3; calcium-binding domain occupies 201–242 (DVDECVLKPSICGTAVCKNIPGDFECECAEGYKYNPVSKSCD). Asn-219 carries the post-translational modification (3R)-3-hydroxyasparagine. The EGF-like 4; calcium-binding domain occupies 243–283 (DVDECAENLCAQLCVNYPGGYSCYCDGKKGFKLAQDQKSCE). (3R)-3-hydroxyasparagine is present on Asn-258. 2 consecutive Laminin G-like domains span residues 299–475 (LLYL…NKHC) and 484–665 (YYPG…AHSC). 2 N-linked (GlcNAc...) asparagine glycosylation sites follow: Asn-499 and Asn-509.

The iron and 2-oxoglutarate dependent 3-hydroxylation of aspartate and asparagine is (R) stereospecific within EGF domains. Plasma.

The protein resides in the secreted. Functionally, anticoagulant plasma protein; it is a cofactor to activated protein C in the degradation of coagulation factors Va and VIIIa. It helps to prevent coagulation and stimulating fibrinolysis. In Bos taurus (Bovine), this protein is Vitamin K-dependent protein S (PROS1).